The chain runs to 247 residues: Probable transcriptional regulatory protein Spro_2779 (247 aa).

It belongs to the TACO1 family.

The protein localises to the cytoplasm. The sequence is that of Probable transcriptional regulatory protein Spro_2779 from Serratia proteamaculans (strain 568).